We begin with the raw amino-acid sequence, 361 residues long: Fructose-1,6-bisphosphatase class 1 2 (361 aa).

Residues Glu110, Asp134, Leu136, and Asp137 each contribute to the Mg(2+) site. Substrate contacts are provided by residues 137 to 140 (DGSS), Asn231, Tyr264, and Lys294. Residue Glu300 participates in Mg(2+) binding.

It belongs to the FBPase class 1 family. Homotetramer. Requires Mg(2+) as cofactor.

It is found in the cytoplasm. It catalyses the reaction beta-D-fructose 1,6-bisphosphate + H2O = beta-D-fructose 6-phosphate + phosphate. The protein operates within carbohydrate biosynthesis; gluconeogenesis. The chain is Fructose-1,6-bisphosphatase class 1 2 from Salinibacter ruber (strain DSM 13855 / M31).